We begin with the raw amino-acid sequence, 354 residues long: MDGNKDDASRCLRIAEDAIVSGDKERALKFINMAKRLNPSLSVDELVAACDNLDSVSRNSSVSEKLKTMDGDDDKLETGKMKYTEENVDLVRNIIRNNDYYAILGLEKNCSVDEIRKAYRKLSLKVHPDKNKAPGSEEAFKKVSKAFTCLSDGNSRRQFDQVGIVDEFDHVQRRNRRPRRRYNTRNDFFDDEFDPEEIFRTVFGQQREVFRASHAYRTRQPRNQFREEEINVAGPSCLTIIQILPFFLLLLLAYLPFSEPDYSLHKNQSYQIPKTTQNTEISFYVRSASAFDEKFPLSSSARANLEGNVIKEYKHFLFQSCRIELQKRRWNKKIPTPHCIELQDRGFVDRHIPI.

The 65-residue stretch at aspartate 99–glycine 163 folds into the J domain. Residues cysteine 237–phenylalanine 257 traverse the membrane as a helical segment.

Belongs to the DnaJ family. C/III subfamily.

It is found in the membrane. Plays a continuous role in plant development probably in the structural organization of compartments. The polypeptide is Chaperone protein dnaJ 49 (ATJ49) (Arabidopsis thaliana (Mouse-ear cress)).